The primary structure comprises 1170 residues: Short transient receptor potential channel 2 (1170 aa).

The Cytoplasmic portion of the chain corresponds to 1-627 (MLMSLTDSKE…GWRGSTTIWK (627 aa)). 3 disordered regions span residues 64-113 (SLSD…QTST), 142-231 (AHKA…QATG), and 322-342 (ESGS…VEES). The span at 74–85 (SPGSSGLNQNSS) shows a compositional bias: polar residues. A compositionally biased stretch (basic and acidic residues) spans 158–177 (GEPDSSHPERAEPRAEEPNR). 4 ANK repeats span residues 300 to 329 (KFPP…DPSG), 346 to 376 (SWRE…DFRQ), 377 to 405 (IHEA…REKG), and 429 to 458 (PGVT…TIAR). The chain crosses the membrane as a helical span at residues 628-648 (LFVAFLIFLTMPFLCIGYWLA). At 649-658 (PKSRLGRLLK) the chain is on the extracellular side. The chain crosses the membrane as a helical span at residues 659–679 (IPVLKFLLHSASYLWFLIFLL). At 680-701 (GESLVMETQLSTFKGRSQSVWE) the chain is on the cytoplasmic side. A helical transmembrane segment spans residues 702-722 (TSLHMIWVTGFLWFECKEVWI). Topologically, residues 723–737 (EGLRSYLLDWWNFLD) are extracellular. The helical transmembrane segment at 738–758 (VVILSLYLASFALRLLLAGLA) threads the bilayer. The Cytoplasmic portion of the chain corresponds to 759 to 788 (YMHCRDASDSSTCRYFTTAERSEWRTEDPQ). A helical transmembrane segment spans residues 789-809 (FLAEVLFAVTSMLSFTRLAYI). Residues 810 to 832 (LPAHESLGTLQISIGKMIDDMIR) are Extracellular-facing. Residues 833 to 853 (FMFILMIILTAFLCGLNNIYV) form a helical membrane-spanning segment. Topologically, residues 854–898 (PYQETEKLGNFNETFQFLFWTMFGMEEHSVVDMPQFLVPEFVGRA) are cytoplasmic. A helical transmembrane segment spans residues 899–919 (MYGIFTIVMVIVLLNMLIAMI). Over 920 to 1170 (TNSFQKIEDD…GEDLETKGES (251 aa)) the chain is Extracellular. A coiled-coil region spans residues 1030-1068 (RREFEETRRKDLGNRLTELTKTVSRLQSEVASVQKTVAA). The disordered stretch occupies residues 1118 to 1170 (LEDSLDATGEAGTPASGESSSSSSAHVLVHREQEAEGAGDLPLGEDLETKGES).

This sequence belongs to the transient receptor (TC 1.A.4) family. STrpC subfamily. TRPC2 sub-subfamily. In terms of tissue distribution, expressed exclusively in vomeronasal organ neurons (sensory microvilli).

It is found in the membrane. Functionally, thought to form a receptor-activated calcium permeant cation channel. Probably is operated by a phosphatidylinositol second messenger system activated by receptor tyrosine kinases or G-protein coupled receptors. Is not activated by intracellular calcium store depletion. The polypeptide is Short transient receptor potential channel 2 (Trpc2) (Rattus norvegicus (Rat)).